Here is a 557-residue protein sequence, read N- to C-terminus: MCGILAILNSLEEASKLRKKALSLSSRLRHRGPDWNGIYQSSDSILTHERLAIVGLENGAQPLLNEDETIALTVNGEIYNHEKLREDLVATGKHTFKTHSDCEPILHLYEDKGDDFVHMLDGDFAFVVYNKKANSFLAARDPIGVVPLYIGWHKDGSIWFSSEMKAIKDDCYKFQPFPPGHYFSSKTKEFVRYYKPNWIMGDSPSGVLKSEEQVLPAIKEAFEQAVVSRMMSDVPYGVLLSGGLDSSLVASIVSRHAEQRVEDHEKSRAWWPRIHSFCIGLKDAPDLKAARDVADYLQTVHHEYHFTVQEGIDALPDVIKHLETYDVTTIRASTPMYFLSRKIKAMGVKMVLSGEGSDEIFGGYLYFHNAPDANEFHVECCRRIKALHSFDCLRANKSTAAWGVEVRVPFLDQRFLDVAMNIDPSHKVCHDDQGKKRMEKYILRKAFETKEGEKPYLPSSVLWRQKEQFSDGVGYSWIDGLKENAENEVSDEEFAKRESYFPDDTPTTKEAFLYRKMFEAIYPGKECMETVQRWIPTWGASQDPSGRAQKVHLSTTE.

The active-site For GATase activity is cysteine 2. The Glutamine amidotransferase type-2 domain occupies 2–188 (CGILAILNSL…PGHYFSSKTK (187 aa)). L-glutamine is bound by residues 50–54 (RLAIV), 75–77 (NGE), and aspartate 101. Positions 217–466 (AIKEAFEQAV…LPSSVLWRQK (250 aa)) constitute an Asparagine synthetase domain. Residues leucine 239, isoleucine 279, and 353–354 (SG) contribute to the ATP site. Residues 538–557 (WGASQDPSGRAQKVHLSTTE) are disordered.

It catalyses the reaction L-aspartate + L-glutamine + ATP + H2O = L-asparagine + L-glutamate + AMP + diphosphate + H(+). It participates in amino-acid biosynthesis; L-asparagine biosynthesis; L-asparagine from L-aspartate (L-Gln route): step 1/1. This Dictyostelium discoideum (Social amoeba) protein is Probable asparagine synthetase [glutamine-hydrolyzing] (asns).